The primary structure comprises 427 residues: tRNA pseudouridine synthase Pus10 (427 aa).

Residue D240 is the Nucleophile of the active site. Substrate is bound by residues Y306 and Y378.

It belongs to the pseudouridine synthase Pus10 family.

The enzyme catalyses uridine(54) in tRNA = pseudouridine(54) in tRNA. The catalysed reaction is uridine(55) in tRNA = pseudouridine(55) in tRNA. In terms of biological role, responsible for synthesis of pseudouridine from uracil-54 and uracil-55 in the psi GC loop of transfer RNAs. This Halorubrum lacusprofundi (strain ATCC 49239 / DSM 5036 / JCM 8891 / ACAM 34) protein is tRNA pseudouridine synthase Pus10.